A 336-amino-acid chain; its full sequence is Ultraviolet-sensitive opsin (336 aa).

Over 1–29 the chain is Extracellular; that stretch reads MDAWTYQFGNLSKISPFEGPQYHLAPKWA. Asparagine 10 carries N-linked (GlcNAc...) asparagine glycosylation. A helical membrane pass occupies residues 30-54; the sequence is FYLQAAFMGFVFFVGTPLNAIVLFV. Over 55–66 the chain is Cytoplasmic; that stretch reads TMKYKKLRQPLN. Residues 67-91 traverse the membrane as a helical segment; sequence YILVNISLGGFIFDTFSVSQVFFSA. The Extracellular portion of the chain corresponds to 92-106; sequence LRGYYFFGYTLCAME. Cysteine 103 and cysteine 180 are disulfide-bonded. Residues 107–126 traverse the membrane as a helical segment; that stretch reads AAMGSIAGLVTGWSLAVLAF. The Cytoplasmic segment spans residues 127–145; it reads ERYVVICKPFGSFKFGQSQ. The chain crosses the membrane as a helical span at residues 146-169; it reads ALGAVALTWIIGIGCATPPFWGWS. At 170-195 the chain is on the extracellular side; that stretch reads RYIPEGIGTACGPDWYTKNEEYNTES. The helical transmembrane segment at 196–223 threads the bilayer; the sequence is YTYFLLVSCFMMPIMIITFSYSQLLGAL. The Cytoplasmic segment spans residues 224 to 245; it reads RAVAAQQAESASTQKAEKEVSR. A helical transmembrane segment spans residues 246–269; the sequence is MVVVMVGSFVVCYGPYAITALYFS. Residues 270 to 277 lie on the Extracellular side of the membrane; the sequence is YAEDSNKD. The helical transmembrane segment at 278 to 302 threads the bilayer; that stretch reads YRLVAIPSLFSKSSCVYNPLIYAFM. N6-(retinylidene)lysine is present on lysine 289. Over 303 to 336 the chain is Cytoplasmic; it reads NKQFNACIMETVFGKKIDESSEVSSKTETSSVSA.

The protein belongs to the G-protein coupled receptor 1 family. Opsin subfamily. In terms of processing, phosphorylated on some or all of the serine and threonine residues present in the C-terminal region.

It localises to the membrane. Its function is as follows. Visual pigments are the light-absorbing molecules that mediate vision. They consist of an apoprotein, opsin, covalently linked to cis-retinal. The chain is Ultraviolet-sensitive opsin from Carassius auratus (Goldfish).